We begin with the raw amino-acid sequence, 232 residues long: Flagellar L-ring protein (232 aa).

The signal sequence occupies residues 1 to 21 (MQKYALHAYPVMALMVATLTG). Cys-22 is lipidated: N-palmitoyl cysteine. The S-diacylglycerol cysteine moiety is linked to residue Cys-22.

The protein belongs to the FlgH family. The basal body constitutes a major portion of the flagellar organelle and consists of four rings (L,P,S, and M) mounted on a central rod.

It localises to the cell outer membrane. The protein resides in the bacterial flagellum basal body. Functionally, assembles around the rod to form the L-ring and probably protects the motor/basal body from shearing forces during rotation. This Salmonella gallinarum (strain 287/91 / NCTC 13346) protein is Flagellar L-ring protein.